The chain runs to 189 residues: Hypoxanthine/guanine phosphoribosyltransferase (189 aa).

Belongs to the purine/pyrimidine phosphoribosyltransferase family. Archaeal HPRT subfamily. Homodimer.

It localises to the cytoplasm. It carries out the reaction IMP + diphosphate = hypoxanthine + 5-phospho-alpha-D-ribose 1-diphosphate. The catalysed reaction is GMP + diphosphate = guanine + 5-phospho-alpha-D-ribose 1-diphosphate. It participates in purine metabolism; IMP biosynthesis via salvage pathway; IMP from hypoxanthine: step 1/1. Catalyzes a salvage reaction resulting in the formation of IMP that is energically less costly than de novo synthesis. This is Hypoxanthine/guanine phosphoribosyltransferase from Methanothrix soehngenii (strain ATCC 5969 / DSM 3671 / JCM 10134 / NBRC 103675 / OCM 69 / GP-6) (Methanosaeta concilii).